Consider the following 241-residue polypeptide: NADPH-dependent FMN reductase ArsH (241 aa).

43–50 contacts FMN; the sequence is SLRTVSYS.

The protein belongs to the ArsH family. As to quaternary structure, homotetramer. It depends on FMN as a cofactor.

Functionally, has NADPH-dependent FMN reductase activity. No activity with NADH. May play a role in resistance to heavy metal toxicity. In Rhizobium meliloti (strain 1021) (Ensifer meliloti), this protein is NADPH-dependent FMN reductase ArsH.